We begin with the raw amino-acid sequence, 44 residues long: Photosystem I reaction center subunit IX (44 aa).

A helical membrane pass occupies residues 7-27 (YLSTVPVLTTLWFGSLAGLLI).

The protein belongs to the PsaJ family.

Its subcellular location is the plastid. The protein localises to the chloroplast thylakoid membrane. May help in the organization of the PsaE and PsaF subunits. The protein is Photosystem I reaction center subunit IX of Dioscorea elephantipes (Elephant's foot yam).